Consider the following 507-residue polypeptide: tRNA (guanine(10)-N(2))-methyltransferase TRMT11 (507 aa).

Basic and acidic residues predominate over residues 459-475 (EKTKKKEQKKKSVENHL). The tract at residues 459–507 (EKTKKKEQKKKSVENHLKSKNNNDVINNNSNDTNSNNNCNNENNIENQK) is disordered. The segment covering 480–507 (NNDVINNNSNDTNSNNNCNNENNIENQK) has biased composition (low complexity).

The protein belongs to the class I-like SAM-binding methyltransferase superfamily. TRM11 methyltransferase family. As to quaternary structure, part of the heterodimeric TRMT11-TRM112 methyltransferase complex; this complex forms an active tRNA methyltransferase, where TRMT112 acts as an activator of the catalytic subunit TRMT11.

Its subcellular location is the cytoplasm. It carries out the reaction guanosine(10) in tRNA + S-adenosyl-L-methionine = N(2)-methylguanosine(10) in tRNA + S-adenosyl-L-homocysteine + H(+). Catalytic subunit of the TRMT11-TRM112 methyltransferase complex, that specifically mediates the S-adenosyl-L-methionine-dependent N(2)-methylation of guanosine nucleotide at position 10 (m2G10) in tRNAs. This is one of the major tRNA (guanine-N(2))-methyltransferases. This chain is tRNA (guanine(10)-N(2))-methyltransferase TRMT11 (trmt11), found in Dictyostelium discoideum (Social amoeba).